Reading from the N-terminus, the 335-residue chain is DNA-directed RNA polymerase subunit alpha (335 aa).

An alpha N-terminal domain (alpha-NTD) region spans residues 1–231 (MVREKITVST…DLLIPFLHTK (231 aa)). The interval 263–335 (KKMALKSIFI…FVIDLPKNKF (73 aa)) is alpha C-terminal domain (alpha-CTD).

Belongs to the RNA polymerase alpha chain family. As to quaternary structure, in plastids the minimal PEP RNA polymerase catalytic core is composed of four subunits: alpha, beta, beta', and beta''. When a (nuclear-encoded) sigma factor is associated with the core the holoenzyme is formed, which can initiate transcription.

It localises to the plastid. It is found in the chloroplast. It catalyses the reaction RNA(n) + a ribonucleoside 5'-triphosphate = RNA(n+1) + diphosphate. Its function is as follows. DNA-dependent RNA polymerase catalyzes the transcription of DNA into RNA using the four ribonucleoside triphosphates as substrates. The protein is DNA-directed RNA polymerase subunit alpha of Helianthus annuus (Common sunflower).